The following is a 335-amino-acid chain: Holliday junction branch migration complex subunit RuvB (335 aa).

Positions 4 to 184 (ADRIISSNAQ…FGIVQRLEFY (181 aa)) are large ATPase domain (RuvB-L). ATP is bound by residues Ile23, Arg24, Gly65, Lys68, Thr69, Thr70, 131-133 (EDY), Arg174, Tyr184, and Arg221. Thr69 lines the Mg(2+) pocket. Residues 185-255 (SVEDLTSIVA…IAKSALSMLD (71 aa)) form a small ATPAse domain (RuvB-S) region. Residues 258–335 (QAGFDYLDRK…RHFGLDKLTE (78 aa)) form a head domain (RuvB-H) region. The DNA site is built by Arg294, Arg313, and Arg318.

This sequence belongs to the RuvB family. Homohexamer. Forms an RuvA(8)-RuvB(12)-Holliday junction (HJ) complex. HJ DNA is sandwiched between 2 RuvA tetramers; dsDNA enters through RuvA and exits via RuvB. An RuvB hexamer assembles on each DNA strand where it exits the tetramer. Each RuvB hexamer is contacted by two RuvA subunits (via domain III) on 2 adjacent RuvB subunits; this complex drives branch migration. In the full resolvosome a probable DNA-RuvA(4)-RuvB(12)-RuvC(2) complex forms which resolves the HJ.

The protein localises to the cytoplasm. It catalyses the reaction ATP + H2O = ADP + phosphate + H(+). The RuvA-RuvB-RuvC complex processes Holliday junction (HJ) DNA during genetic recombination and DNA repair, while the RuvA-RuvB complex plays an important role in the rescue of blocked DNA replication forks via replication fork reversal (RFR). RuvA specifically binds to HJ cruciform DNA, conferring on it an open structure. The RuvB hexamer acts as an ATP-dependent pump, pulling dsDNA into and through the RuvAB complex. RuvB forms 2 homohexamers on either side of HJ DNA bound by 1 or 2 RuvA tetramers; 4 subunits per hexamer contact DNA at a time. Coordinated motions by a converter formed by DNA-disengaged RuvB subunits stimulates ATP hydrolysis and nucleotide exchange. Immobilization of the converter enables RuvB to convert the ATP-contained energy into a lever motion, pulling 2 nucleotides of DNA out of the RuvA tetramer per ATP hydrolyzed, thus driving DNA branch migration. The RuvB motors rotate together with the DNA substrate, which together with the progressing nucleotide cycle form the mechanistic basis for DNA recombination by continuous HJ branch migration. Branch migration allows RuvC to scan DNA until it finds its consensus sequence, where it cleaves and resolves cruciform DNA. The protein is Holliday junction branch migration complex subunit RuvB of Mannheimia succiniciproducens (strain KCTC 0769BP / MBEL55E).